The chain runs to 132 residues: Salivary protein 15 Iper-2 (132 aa).

A signal peptide spans 1-18; that stretch reads MKVVCIIVLFVIVAVNES. 5 N-linked (GlcNAc...) asparagine glycosylation sites follow: Asn24, Asn36, Asn62, Asn89, and Asn101. Residues 113–132 are CD4-binding; the sequence is GPNGQTCADKSQCVGHIPGC.

Belongs to the salp15 family. In terms of assembly, interacts with host CD4. Interacts with host DC-SIGN (CD209). As to quaternary structure, (Microbial infection) Interacts with Borrelia outer surface protein C (OspC). Expressed in salivary glands from feeding female ticks. Highly expressed 1 day after start of feeding, and weakly expressed at the initiation of feeding and 4 days after start of feeding.

Its subcellular location is the secreted. In terms of biological role, salivary tick protein that downregulates host immune system by binding to both dendritic cells, and CD4(+) T cells. Specifically binds to the CD4 coreceptor on T cells. This interaction prevents the activation of the Src kinase, Lck, and its downstream substrate Zap-70, and results in deficient activation of PLCgamma1, the repression of calcium fluxes triggered by T-cell antigen receptor (TCR) ligation, and a subsequent reduction in interleukin-2 production. This salivary protein also binds to DC-SIGN (CD209) on dendritic cells (DC) and activates the Raf-1 kinase/MEK signaling pathway that results in down-regulating expression of pro-inflammatory cytokines. Furthermore, it inhibits T cell proliferation induced by DCs. It also inhibits in vitro keratinocyte inflammation induced by Borrelia burgdorferi or by the major outer surface protein (OspC) of Borrelia. In addition, it downregulates chemokines and monocyte chemoattractant protein 1, as well as several antimicrobial peptides such as defensins, cathelicidin, psoriasin, and RNase 7. Apart from its immunomodulatory activities, it is also associated with protection of Borrelia spirochetes from antibody-mediated killing through its binding to OspC. In vivo, tests on different immune disease animal models show promising therapeutic results, e.g., in inhibiting HIV infection, experimental autoimmune encephalomyelitis, transplantation rejection, and asthma. (Microbial infection) Protects Borrelia garinii from anti-Borrelia antibody-mediated cytotoxicity in vitro. May facilitate B.garinii transmission in mouse model. Functionally, (Microbial infection) Protects Borrelia burgdorferi from anti-Borrelia antibody-mediated cytotoxicity in vitro. Its function is as follows. (Microbial infection) Protects Borrelia afzelii from anti-Borrelia antibody-mediated cytotoxicity in vitro. This Ixodes persulcatus (Taiga tick) protein is Salivary protein 15 Iper-2.